Here is a 58-residue protein sequence, read N- to C-terminus: MKEIDLVIDTEEIAEFFYRELARRGYIPSEDELFEIADITFDYLIEKCMIDEELDEDE.

This is an uncharacterized protein from Bacillus subtilis (strain 168).